The sequence spans 591 residues: Aspartate--tRNA(Asp/Asn) ligase (591 aa).

Glu174 is a binding site for L-aspartate. The aspartate stretch occupies residues 198 to 201 (QLFK). Arg220 lines the L-aspartate pocket. ATP-binding positions include 220-222 (RDE) and Gln229. His450 serves as a coordination point for L-aspartate. ATP is bound at residue Glu483. Arg490 contacts L-aspartate. 535–538 (GLDR) contacts ATP.

Belongs to the class-II aminoacyl-tRNA synthetase family. Type 1 subfamily. As to quaternary structure, homodimer.

Its subcellular location is the cytoplasm. It catalyses the reaction tRNA(Asx) + L-aspartate + ATP = L-aspartyl-tRNA(Asx) + AMP + diphosphate. Functionally, aspartyl-tRNA synthetase with relaxed tRNA specificity since it is able to aspartylate not only its cognate tRNA(Asp) but also tRNA(Asn). Reaction proceeds in two steps: L-aspartate is first activated by ATP to form Asp-AMP and then transferred to the acceptor end of tRNA(Asp/Asn). This is Aspartate--tRNA(Asp/Asn) ligase from Pseudomonas aeruginosa (strain LESB58).